Consider the following 405-residue polypeptide: Nicotinate phosphoribosyltransferase (405 aa).

Histidine 230 carries the post-translational modification Phosphohistidine; by autocatalysis.

Belongs to the NAPRTase family. Post-translationally, transiently phosphorylated on a His residue during the reaction cycle. Phosphorylation strongly increases the affinity for substrates and increases the rate of nicotinate D-ribonucleotide production. Dephosphorylation regenerates the low-affinity form of the enzyme, leading to product release.

It carries out the reaction nicotinate + 5-phospho-alpha-D-ribose 1-diphosphate + ATP + H2O = nicotinate beta-D-ribonucleotide + ADP + phosphate + diphosphate. It participates in cofactor biosynthesis; NAD(+) biosynthesis; nicotinate D-ribonucleotide from nicotinate: step 1/1. Catalyzes the synthesis of beta-nicotinate D-ribonucleotide from nicotinate and 5-phospho-D-ribose 1-phosphate at the expense of ATP. In Bordetella bronchiseptica (strain ATCC BAA-588 / NCTC 13252 / RB50) (Alcaligenes bronchisepticus), this protein is Nicotinate phosphoribosyltransferase.